Consider the following 600-residue polypeptide: NADH-quinone oxidoreductase subunit C/D (600 aa).

The NADH dehydrogenase I subunit C stretch occupies residues 1 to 190 (MVNNMTDLTA…SPFELTKAKQ (190 aa)). The segment at 214–600 (DFMFLNLGPN…IDFVMSDVDR (387 aa)) is NADH dehydrogenase I subunit D.

In the N-terminal section; belongs to the complex I 30 kDa subunit family. The protein in the C-terminal section; belongs to the complex I 49 kDa subunit family. As to quaternary structure, NDH-1 is composed of 13 different subunits. Subunits NuoB, CD, E, F, and G constitute the peripheral sector of the complex.

It localises to the cell inner membrane. It catalyses the reaction a quinone + NADH + 5 H(+)(in) = a quinol + NAD(+) + 4 H(+)(out). In terms of biological role, NDH-1 shuttles electrons from NADH, via FMN and iron-sulfur (Fe-S) centers, to quinones in the respiratory chain. The immediate electron acceptor for the enzyme in this species is believed to be ubiquinone. Couples the redox reaction to proton translocation (for every two electrons transferred, four hydrogen ions are translocated across the cytoplasmic membrane), and thus conserves the redox energy in a proton gradient. The polypeptide is NADH-quinone oxidoreductase subunit C/D (Shigella boydii serotype 18 (strain CDC 3083-94 / BS512)).